Consider the following 36-residue polypeptide: Photosystem I reaction center subunit VIII (36 aa).

A helical membrane pass occupies residues 9 to 29 (ILVPLVGLIFPAIAMTSLFIY).

It belongs to the PsaI family.

The protein localises to the plastid. It is found in the chloroplast thylakoid membrane. In terms of biological role, may help in the organization of the PsaL subunit. This is Photosystem I reaction center subunit VIII from Tupiella akineta (Green alga).